A 266-amino-acid polypeptide reads, in one-letter code: Ribosomal RNA small subunit methyltransferase A (266 aa).

S-adenosyl-L-methionine contacts are provided by asparagine 16, leucine 18, glycine 43, glutamate 64, aspartate 89, and asparagine 110.

The protein belongs to the class I-like SAM-binding methyltransferase superfamily. rRNA adenine N(6)-methyltransferase family. RsmA subfamily.

Its subcellular location is the cytoplasm. It catalyses the reaction adenosine(1518)/adenosine(1519) in 16S rRNA + 4 S-adenosyl-L-methionine = N(6)-dimethyladenosine(1518)/N(6)-dimethyladenosine(1519) in 16S rRNA + 4 S-adenosyl-L-homocysteine + 4 H(+). In terms of biological role, specifically dimethylates two adjacent adenosines (A1518 and A1519) in the loop of a conserved hairpin near the 3'-end of 16S rRNA in the 30S particle. May play a critical role in biogenesis of 30S subunits. The chain is Ribosomal RNA small subunit methyltransferase A from Marinomonas sp. (strain MWYL1).